The following is a 1345-amino-acid chain: DNA-directed RNA polymerase subunit beta (1345 aa).

Belongs to the RNA polymerase beta chain family. The RNAP catalytic core consists of 2 alpha, 1 beta, 1 beta' and 1 omega subunit. When a sigma factor is associated with the core the holoenzyme is formed, which can initiate transcription.

It catalyses the reaction RNA(n) + a ribonucleoside 5'-triphosphate = RNA(n+1) + diphosphate. Its function is as follows. DNA-dependent RNA polymerase catalyzes the transcription of DNA into RNA using the four ribonucleoside triphosphates as substrates. This is DNA-directed RNA polymerase subunit beta from Shewanella sp. (strain ANA-3).